A 385-amino-acid chain; its full sequence is MDEIINKYQAVEKLFKEIQQGLAAYDQYKTLISEMMHYNNHIKQEYFNFLMIISPYLIRAHSGETLRNKVNNEIKRLILVENINTKISKTLVSVNFLLQKKLSTDGVKTKNMWCTNNPMLQVKTAHNLFKQLCDTQSKTQWVQTLKYKECKYCHTDMVFNTTQFGLQCPNCGCIQELMGTIFDETHFYNHDGQKAKSGIFNPNRHYRFWIEHILGRNSEQELGTKQDPCGTKVLQQLKKIIKRDNKCIALLTVENIRKMLKEINRTDLNNCVSLILRKLTGVGPPQISESILLRGEYIFTEAIKIREKVCKKGRINRNYYPYYIYKIFDAILPPNDTTNRRILQYIHLQGNDTLANNDSEWESICMELPEIKWKPTDRTHCVHFF.

The segment at 166-190 (LQCPNCGCIQELMGTIFDETHFYNH) adopts a C2H2-type zinc-finger fold.

It belongs to the asfivirus B385R family.

The chain is Zinc finger protein B385R from Ornithodoros (relapsing fever ticks).